We begin with the raw amino-acid sequence, 438 residues long: Chaperone SurA (438 aa).

A signal peptide spans 1-28 (MKTMNPYIRHLILLICCLGGMLAQPLSA). 2 PpiC domains span residues 181–282 (EEEY…KLVS) and 292–390 (VQQT…QVLE).

It is found in the periplasm. The catalysed reaction is [protein]-peptidylproline (omega=180) = [protein]-peptidylproline (omega=0). Its function is as follows. Chaperone involved in the correct folding and assembly of outer membrane proteins. Recognizes specific patterns of aromatic residues and the orientation of their side chains, which are found more frequently in integral outer membrane proteins. May act in both early periplasmic and late outer membrane-associated steps of protein maturation. The polypeptide is Chaperone SurA (Dechloromonas aromatica (strain RCB)).